The primary structure comprises 660 residues: Ankyrin repeat domain-containing protein OPG023 (660 aa).

9 ANK repeats span residues Phe-31 to Lys-64, Asn-101 to Val-131, Asn-135 to Tyr-166, Tyr-190 to Ser-222, Asn-226 to Tyr-257, Arg-268 to Ile-302, Asn-325 to Lys-359, Arg-449 to Ile-478, and Asn-482 to Cys-512. The segment at Asn-578 to Glu-658 is PRANC/F-box-like.

This sequence belongs to the orthopoxvirus OPG023 family. Interacts (via N-terminus) with host RELA. Interacts (via PRANC/F-box-like domain) with the SKP1 component of the host SCF ubiquitin ligase complex.

Substrate-specific adapter of SKP1-containing E3 ubiquitin-protein ligases which mediate the ubiquitination and subsequent proteasomal degradation of host target proteins. Prevents activation and subsequent nuclear localization of NF-kappa-B in infected cells, by targeting NF-kappa-B RELA subunit to the SCF E3 ligase complex. The sequence is that of Ankyrin repeat domain-containing protein OPG023 (OPG023) from Cynomys gunnisoni (Gunnison's prairie dog).